The following is a 2223-amino-acid chain: Protein CHROMATIN REMODELING 4 (2223 aa).

The disordered stretch occupies residues 39-69 (FDSPEYTSSSKPSKQRLKTDSTPERNSSKRK). Positions 55–69 (LKTDSTPERNSSKRK) are enriched in basic and acidic residues. Residues 75 to 122 (YFECVICDLGGDLLCCDSCPRTYHTACLNPPLKRIPNGKWICPKCSPN) form a PHD-type zinc finger. Basic and acidic residues-rich tracts occupy residues 173–187 (EKGK…KSTG), 207–223 (SADD…DDLG), 248–285 (ESKL…ETGK), and 294–305 (ELNDGESLERCK). 3 disordered regions span residues 173–235 (EKGK…LPSD), 248–381 (ESKL…CLED), and 441–474 (AEDR…GTEG). The span at 306-315 (TDKKRAKKSL) shows a compositional bias: basic residues. A compositionally biased stretch (basic and acidic residues) spans 353–368 (ETPEKVKKLPKEERRA). Polar residues predominate over residues 372–381 (TNKSSSCLED). A compositionally biased stretch (basic and acidic residues) spans 441–466 (AEDRIDSSSETGKSSRDSRLRDKDMD). Chromo domains follow at residues 531-587 (EEIE…YKAK) and 601-663 (KQPQ…ERNS). The 178-residue stretch at 701-878 (RRCWHKSKNV…YNLLNFLQPS (178 aa)) folds into the Helicase ATP-binding domain. An ATP-binding site is contributed by 714–721 (DEMGLGKT). Residues 829 to 832 (DEGH) carry the DEAH box motif. Residues 902–909 (LKKLVAPH) carry the Nuclear localization signal motif. A Helicase C-terminal domain is found at 1008 to 1167 (LLHSMLKVLH…GSQKEFEDIL (160 aa)). Disordered regions lie at residues 1268–1300 (EETA…DDVV), 1341–1380 (EAYA…LKEK), 1394–1463 (RRNS…ECLP), 1483–1511 (SESS…FNLP), 1760–1779 (LSSL…SSLF), and 2006–2223 (IPPF…LSDD). The segment covering 1363–1380 (EPELKKEYTPAGRALKEK) has biased composition (basic and acidic residues). Positions 1375-1402 (RALKEKFTKLRERQKNLIARRNSVEESL) form a coiled coil. Residues 1403 to 1414 (PSGNVDQVTEVA) show a composition bias toward polar residues. The span at 2009-2019 (FVIPEPPPPAP) shows a compositional bias: pro residues. The segment covering 2025-2035 (SLRKKRKRKLH) has biased composition (basic residues). Composition is skewed to polar residues over residues 2039 to 2061 (QKTT…GNPQ), 2075 to 2096 (GETS…TEPL), and 2128 to 2148 (TGTT…TINQ). A compositionally biased stretch (basic and acidic residues) spans 2157 to 2171 (DEKVESERTPLHSDE). Residues 2189-2215 (IEAESQNTNAEEEAEAQEEDEESMKMV) are a coiled coil. Positions 2198–2210 (AEEEAEAQEEDEE) are enriched in acidic residues.

This sequence belongs to the SNF2/RAD54 helicase family.

The protein localises to the nucleus. Functionally, chromatin-remodeling protein that binds DNA through histones and regulates gene transcription. May specifically recognize and bind trimethylated 'Lys-27' (H3K27me3) and non-methylated 'Lys-4' of histone H3. Probable chromatin remodeling factor. The protein is Protein CHROMATIN REMODELING 4 of Arabidopsis thaliana (Mouse-ear cress).